A 201-amino-acid chain; its full sequence is MTDSHRPDADDIPDDDELSTDFSNQFLLAMPGVVEGSLAGTVIYICEHTRRGALGLVINRPTDLTLATLFERIDLKLEIGPVKDEMVFFGGPVQTDRGFVLHAPAGDYTSSINLGELALTTSRDVLQAVADGNGPARMLVTLGYAGWGAGQLESEMAQNSWLSVGADSHIIFDVAPEDRYPAALKLLGVDPVMLAGGAGHA.

It belongs to the UPF0301 (AlgH) family.

The chain is UPF0301 protein BP0319 from Bordetella pertussis (strain Tohama I / ATCC BAA-589 / NCTC 13251).